A 174-amino-acid chain; its full sequence is Pectinesterase inhibitor 12 (174 aa).

Positions 1–20 (MKFLVSLVIFSLFLNGFATA) are cleaved as a signal peptide. 2 disulfides stabilise this stretch: Cys-28/Cys-43 and Cys-100/Cys-140. N-linked (GlcNAc...) asparagine glycosylation occurs at Asn-129.

This sequence belongs to the PMEI family.

The protein resides in the secreted. The protein localises to the extracellular space. Its subcellular location is the apoplast. Its function is as follows. Pectin methylesterase (PME) inhibitor involved in the maintenance of cell wall integrity in response to necrotrophic pathogens. Modulates PME activity and pectin methylesterification during infection by Botrytis cinerea and contributes to resistance against the pathogen. The chain is Pectinesterase inhibitor 12 from Arabidopsis thaliana (Mouse-ear cress).